The primary structure comprises 4092 residues: Dynein heavy chain, cytoplasmic (4092 aa).

Positions Met1–Gln1757 are stem. Coiled-coil stretches lie at residues Val154–His175, Lys486–Thr508, Lys542–Glu566, Val932–Glu959, Tyr1042–Met1063, and Lys1681–Tyr1705. 4 AAA regions span residues Tyr1758 to Asn1979, Gln2036 to Val2273, Ser2379 to Gly2628, and Thr2722 to Val2984. ATP contacts are provided by residues Gly1796–Thr1803, Gly2074–Thr2081, Gly2418–Thr2425, and Gly2760–Thr2767. 3 coiled-coil regions span residues Ile2993 to Glu3092, Lys3242 to Thr3300, and Ile3532 to Phe3608. The tract at residues Ile2993 to Thr3300 is stalk. AAA regions lie at residues Leu3370–Lys3599 and Leu3760–Asn3970.

This sequence belongs to the dynein heavy chain family. As to quaternary structure, the dynein complex consists of at least two heavy chains and a number of intermediate and light chains. Interacts with DYN3.

The protein localises to the cytoplasm. Its subcellular location is the cytoskeleton. Its function is as follows. Cytoplasmic dynein acts as a motor for the intracellular retrograde motility of vesicles and organelles along microtubules. Dynein has ATPase activity; the force-producing power stroke is thought to occur on release of ADP. Required to maintain uniform nuclear distribution in hyphae. May play an important role in the proper orientation of the mitotic spindle into the budding daughter cell yeast. Probably required for normal progression of the cell cycle. This Saccharomyces cerevisiae (strain ATCC 204508 / S288c) (Baker's yeast) protein is Dynein heavy chain, cytoplasmic (DYN1).